A 130-amino-acid polypeptide reads, in one-letter code: Small ribosomal subunit protein uS11 (130 aa).

Belongs to the universal ribosomal protein uS11 family. As to quaternary structure, part of the 30S ribosomal subunit. Interacts with proteins S7 and S18. Binds to IF-3.

Its function is as follows. Located on the platform of the 30S subunit, it bridges several disparate RNA helices of the 16S rRNA. Forms part of the Shine-Dalgarno cleft in the 70S ribosome. This chain is Small ribosomal subunit protein uS11, found in Latilactobacillus sakei subsp. sakei (strain 23K) (Lactobacillus sakei subsp. sakei).